We begin with the raw amino-acid sequence, 236 residues long: Ubiquinone biosynthesis O-methyltransferase (236 aa).

The S-adenosyl-L-methionine site is built by Arg39, Gly59, Asp80, and Met124.

It belongs to the methyltransferase superfamily. UbiG/COQ3 family.

It catalyses the reaction a 3-demethylubiquinol + S-adenosyl-L-methionine = a ubiquinol + S-adenosyl-L-homocysteine + H(+). The enzyme catalyses a 3-(all-trans-polyprenyl)benzene-1,2-diol + S-adenosyl-L-methionine = a 2-methoxy-6-(all-trans-polyprenyl)phenol + S-adenosyl-L-homocysteine + H(+). The protein operates within cofactor biosynthesis; ubiquinone biosynthesis. Functionally, O-methyltransferase that catalyzes the 2 O-methylation steps in the ubiquinone biosynthetic pathway. This Shewanella putrefaciens (strain CN-32 / ATCC BAA-453) protein is Ubiquinone biosynthesis O-methyltransferase.